Reading from the N-terminus, the 106-residue chain is Aspartyl/glutamyl-tRNA(Asn/Gln) amidotransferase subunit C (106 aa).

The protein belongs to the GatC family. Heterotrimer of A, B and C subunits.

The enzyme catalyses L-glutamyl-tRNA(Gln) + L-glutamine + ATP + H2O = L-glutaminyl-tRNA(Gln) + L-glutamate + ADP + phosphate + H(+). It carries out the reaction L-aspartyl-tRNA(Asn) + L-glutamine + ATP + H2O = L-asparaginyl-tRNA(Asn) + L-glutamate + ADP + phosphate + 2 H(+). Allows the formation of correctly charged Asn-tRNA(Asn) or Gln-tRNA(Gln) through the transamidation of misacylated Asp-tRNA(Asn) or Glu-tRNA(Gln) in organisms which lack either or both of asparaginyl-tRNA or glutaminyl-tRNA synthetases. The reaction takes place in the presence of glutamine and ATP through an activated phospho-Asp-tRNA(Asn) or phospho-Glu-tRNA(Gln). This chain is Aspartyl/glutamyl-tRNA(Asn/Gln) amidotransferase subunit C, found in Lactiplantibacillus plantarum (strain ATCC BAA-793 / NCIMB 8826 / WCFS1) (Lactobacillus plantarum).